We begin with the raw amino-acid sequence, 173 residues long: DELTA-actitoxin-Oor1b (173 aa).

Residues 6–25 (GAALGFNVHQTVLKALGQVS) are N-terminal region. Phosphocholine-binding residues include Ser49, Val82, Ser100, Pro102, Tyr128, and Tyr133. Positions 100–115 (SVPFDYNLYSNWWDVK) are trp-rich region, which is important for the binding to lipid membrane.

The protein belongs to the actinoporin family. Sea anemone subfamily. Octamer or nonamer in membranes. Monomer in the soluble state.

It localises to the secreted. It is found in the nematocyst. Its subcellular location is the target cell membrane. Pore-forming protein that forms cations-selective hydrophilic pores of around 1 nm and causes cardiac stimulation and cytolysis. Pore formation is a multi-step process that involves specific recognition of membrane sphingomyelin (but neither cholesterol nor phosphatidylcholine) using aromatic rich region and adjacent phosphocholine (POC) binding site, firm binding to the membrane (mainly driven by hydrophobic interactions) accompanied by the transfer of the N-terminal region to the lipid-water interface and finally pore formation after oligomerization of monomers. Cytolytic effects include red blood cells hemolysis, platelet aggregation and lysis, cytotoxic and cytostatic effects on fibroblasts. Lethality in mammals has been ascribed to severe vasospasm of coronary vessels, cardiac arrhythmia, and inotropic effects. The polypeptide is DELTA-actitoxin-Oor1b (Oulactis orientalis (Japan anemone)).